The chain runs to 640 residues: Acid beta-fructofuranosidase 2, vacuolar (640 aa).

Residues 1–22 are disordered; the sequence is MDTNTTSYTPLPGDPFLSGPPE. Over 1 to 29 the chain is Cytoplasmic; it reads MDTNTTSYTPLPGDPFLSGPPETPRRPLK. Positions 1-78 are cleaved as a propeptide — removed in mature form; it reads MDTNTTSYTP…HPQSTTNTML (78 aa). Residues 30-49 traverse the membrane as a helical segment; that stretch reads GFAVIFASVIFLMSLVALII. Residues 50–616 lie on the Lumenal side of the membrane; it reads HQGPQQPPDV…FSPDAASHSS (567 aa). Substrate-binding positions include 93 to 96, Gln-112, Trp-120, 155 to 156, 219 to 220, Glu-274, and Asp-307; these read WMND, WT, and RD. The active site involves Asp-96. Cys-464 and Cys-512 are joined by a disulfide. A helical membrane pass occupies residues 617–639; that stretch reads FTPVTVFIKFIVPFGIFLTLYFV. A topological domain (cytoplasmic) is located at residue Arg-640.

Belongs to the glycosyl hydrolase 32 family. Expressed in buds, stems, roots and leaves.

The protein localises to the membrane. It localises to the vacuole membrane. It carries out the reaction Hydrolysis of terminal non-reducing beta-D-fructofuranoside residues in beta-D-fructofuranosides.. Functionally, vacuolar invertase. The chain is Acid beta-fructofuranosidase 2, vacuolar from Rosa hybrid cultivar.